Consider the following 445-residue polypeptide: Cyclic GMP-AMP phosphodiesterase SMPDL3A (445 aa).

The first 22 residues, 1–22, serve as a signal peptide directing secretion; sequence MALPGNFLCCLLVAWLCDPGLG. Zn(2+) contacts are provided by Asp-42 and His-44. Cys-59 and Cys-78 are disulfide-bonded. An N-linked (GlcNAc...) asparagine glycan is attached at Asn-66. Asp-107 is a Zn(2+) binding site. His-111 contacts ATP. N-linked (GlcNAc...) asparagine glycosylation is present at Asn-128. Asn-148 provides a ligand contact to Zn(2+). Positions 148 and 149 each coordinate ATP. N-linked (GlcNAc...) asparagine glycans are attached at residues Asn-219 and Asn-235. 3 residues coordinate Zn(2+): His-249, His-290, and His-292. 2 N-linked (GlcNAc...) asparagine glycosylation sites follow: Asn-353 and Asn-364. Disulfide bonds link Cys-417–Cys-421 and Cys-427–Cys-440.

It belongs to the acid sphingomyelinase family. Monomer. Homodimer; homodimerizes following 2',3'-cGAMP-binding. Requires Zn(2+) as cofactor.

Its subcellular location is the secreted. The catalysed reaction is 2',3'-cGAMP + H2O = 5'-pGpA(2'-5') + H(+). It catalyses the reaction 5'-pGpA(2'-5') + H2O = 5'-GpA(2'-5') + phosphate. The enzyme catalyses a ribonucleoside 5'-triphosphate + H2O = a ribonucleoside 5'-diphosphate + phosphate + H(+). It carries out the reaction ATP + H2O = ADP + phosphate + H(+). Functionally, cyclic-nucleotide phosphodiesterase that acts as a negative regulator of innate immunity by mediating degradation of 2',3'-cGAMP, thereby inhibiting the cGAS-STING signaling. Specifically linearizes 2',3'-cGAMP into 2'5'-bond pGpA and further hydrolyzes pGpA to produce GpA. Also has in vitro nucleotide phosphodiesterase activity with nucleoside triphosphates, such as ATP. Has in vitro activity with p-nitrophenyl-TMP. Has lower activity with nucleoside diphosphates, and no activity with nucleoside monophosphates. Has in vitro activity with CDP-choline, giving rise to CMP and phosphocholine. Has in vitro activity with CDP-ethanolamine. Does not have sphingomyelin phosphodiesterase activity. The chain is Cyclic GMP-AMP phosphodiesterase SMPDL3A (Smpdl3a) from Rattus norvegicus (Rat).